Reading from the N-terminus, the 469-residue chain is Transcription factor phomD' (469 aa).

A DNA-binding region (zn(2)-C6 fungal-type) is located at residues 14-41; it reads CNACNESKVRCSQRKPTCARCERNGVEC. Residues 49–118 form a disordered region; it reads THKDAPPISM…QQKDEAAAAA (70 aa). The segment covering 82 to 93 has biased composition (polar residues); that stretch reads KANSNSSSNWHM. Residues 104–118 are compositionally biased toward low complexity; it reads QQQQQQQKDEAAAAA.

It is found in the nucleus. Its function is as follows. Transcription factor; part of the gene cluster that mediates the biosynthesis of the phomopsins, a group of hexapeptide mycotoxins which infects lupins and causes lupinosis disease in livestock. May play a role in the regulation of the production of phomopsins. This is Transcription factor phomD' from Diaporthe leptostromiformis (Lupinosis disease fungus).